The following is a 150-amino-acid chain: D-aminoacyl-tRNA deacylase (150 aa).

The short motif at 138–139 (GP) is the Gly-cisPro motif, important for rejection of L-amino acids element.

Belongs to the DTD family. Homodimer.

It is found in the cytoplasm. It catalyses the reaction glycyl-tRNA(Ala) + H2O = tRNA(Ala) + glycine + H(+). It carries out the reaction a D-aminoacyl-tRNA + H2O = a tRNA + a D-alpha-amino acid + H(+). Its function is as follows. An aminoacyl-tRNA editing enzyme that deacylates mischarged D-aminoacyl-tRNAs. Also deacylates mischarged glycyl-tRNA(Ala), protecting cells against glycine mischarging by AlaRS. Acts via tRNA-based rather than protein-based catalysis; rejects L-amino acids rather than detecting D-amino acids in the active site. By recycling D-aminoacyl-tRNA to D-amino acids and free tRNA molecules, this enzyme counteracts the toxicity associated with the formation of D-aminoacyl-tRNA entities in vivo and helps enforce protein L-homochirality. This is D-aminoacyl-tRNA deacylase from Flavobacterium johnsoniae (strain ATCC 17061 / DSM 2064 / JCM 8514 / BCRC 14874 / CCUG 350202 / NBRC 14942 / NCIMB 11054 / UW101) (Cytophaga johnsonae).